A 619-amino-acid polypeptide reads, in one-letter code: Dihydroxy-acid dehydratase (619 aa).

Asp81 contributes to the Mg(2+) binding site. Cys122 contributes to the [2Fe-2S] cluster binding site. Residues Asp123 and Lys124 each contribute to the Mg(2+) site. Position 124 is an N6-carboxylysine (Lys124). Cys195 provides a ligand contact to [2Fe-2S] cluster. Glu494 lines the Mg(2+) pocket. Residue Ser520 is the Proton acceptor of the active site.

It belongs to the IlvD/Edd family. As to quaternary structure, homodimer. Requires [2Fe-2S] cluster as cofactor. It depends on Mg(2+) as a cofactor.

The catalysed reaction is (2R)-2,3-dihydroxy-3-methylbutanoate = 3-methyl-2-oxobutanoate + H2O. It carries out the reaction (2R,3R)-2,3-dihydroxy-3-methylpentanoate = (S)-3-methyl-2-oxopentanoate + H2O. It functions in the pathway amino-acid biosynthesis; L-isoleucine biosynthesis; L-isoleucine from 2-oxobutanoate: step 3/4. The protein operates within amino-acid biosynthesis; L-valine biosynthesis; L-valine from pyruvate: step 3/4. Functionally, functions in the biosynthesis of branched-chain amino acids. Catalyzes the dehydration of (2R,3R)-2,3-dihydroxy-3-methylpentanoate (2,3-dihydroxy-3-methylvalerate) into 2-oxo-3-methylpentanoate (2-oxo-3-methylvalerate) and of (2R)-2,3-dihydroxy-3-methylbutanoate (2,3-dihydroxyisovalerate) into 2-oxo-3-methylbutanoate (2-oxoisovalerate), the penultimate precursor to L-isoleucine and L-valine, respectively. The polypeptide is Dihydroxy-acid dehydratase (Shewanella sp. (strain MR-7)).